Reading from the N-terminus, the 172-residue chain is Shikimate kinase (172 aa).

Residue 14-19 (GAGKST) coordinates ATP. S18 serves as a coordination point for Mg(2+). Substrate-binding residues include D36, R60, and G82. R120 lines the ATP pocket. A substrate-binding site is contributed by R139. Q156 contributes to the ATP binding site.

This sequence belongs to the shikimate kinase family. As to quaternary structure, monomer. Mg(2+) is required as a cofactor.

It localises to the cytoplasm. The enzyme catalyses shikimate + ATP = 3-phosphoshikimate + ADP + H(+). The protein operates within metabolic intermediate biosynthesis; chorismate biosynthesis; chorismate from D-erythrose 4-phosphate and phosphoenolpyruvate: step 5/7. Catalyzes the specific phosphorylation of the 3-hydroxyl group of shikimic acid using ATP as a cosubstrate. In Vibrio parahaemolyticus serotype O3:K6 (strain RIMD 2210633), this protein is Shikimate kinase.